We begin with the raw amino-acid sequence, 167 residues long: Transcription factor HES-5 (167 aa).

Residues 16–72 (KNRLRKPVVEKMRRDRINSSIEQLKLLLEQEFARHQPNSKLEKADILEMAVSYLKHS) form the bHLH domain. In terms of domain architecture, Orange spans 88 to 119 (YSEGYSWCLQEAVQFLTLHAASDTQMKLLYHF). A compositionally biased stretch (pro residues) spans 124–138 (APAAPAKEPPAPGAA). The tract at residues 124 to 167 (APAAPAKEPPAPGAAPQPARSSAKAAAAAVSTSRQPACGLWRPW) is disordered. A compositionally biased stretch (low complexity) spans 139 to 160 (PQPARSSAKAAAAAVSTSRQPA). The WRPW motif signature appears at 164 to 167 (WRPW).

Transcription repression requires formation of a complex with a corepressor protein of the Groucho/TLE family.

Its subcellular location is the nucleus. In terms of biological role, transcriptional repressor of genes that require a bHLH protein for their transcription. Plays an important role as neurogenesis negative regulator. The sequence is that of Transcription factor HES-5 (Hes5) from Mus musculus (Mouse).